A 38-amino-acid polypeptide reads, in one-letter code: Large ribosomal subunit protein bL36 (38 aa).

It belongs to the bacterial ribosomal protein bL36 family.

The chain is Large ribosomal subunit protein bL36 from Pelodictyon phaeoclathratiforme (strain DSM 5477 / BU-1).